The following is a 601-amino-acid chain: Glutathione-regulated potassium-efflux system protein KefB (601 aa).

Helical transmembrane passes span 4-24 (ADLLTAGVLFLFAAVAAVPLA), 29-49 (IGAVLGYLLAGIAIGPWGLGF), 55-75 (EILHFSELGVVFLMFIIGLEL), 87-107 (IFGVGAAQVLLSAAVLAGLLM), 111-131 (FLWQAAVVGGIGLAMSSTAMA), 152-172 (VLLFQDLAVIPALALVPLLAG), 177-197 (HFDWFKVAMKVLAFAVMLIGG), 207-227 (FIAASGVREVFTAATLLLVLS), 230-250 (LFMDALGLSMALGTFIAGVLL), 262-282 (AIDPFKGLLLGLFFISVGMSL), 284-304 (LGVLYTHLLWVAASVVILVVI), 324-344 (MQFASVLSQGGEFAFVLFSTA), and 356-376 (ALLLVTVTLSMMTTPLLMKGI). Residues 400-519 (KPQVVVVGFG…AGVTQFSRET (120 aa)) form the RCK N-terminal domain.

Belongs to the monovalent cation:proton antiporter 2 (CPA2) transporter (TC 2.A.37) family. KefB subfamily. In terms of assembly, interacts with the regulatory subunit KefG.

The protein localises to the cell inner membrane. Its function is as follows. Pore-forming subunit of a potassium efflux system that confers protection against electrophiles. Catalyzes K(+)/H(+) antiport. The protein is Glutathione-regulated potassium-efflux system protein KefB of Salmonella typhi.